The primary structure comprises 855 residues: Envelope glycoprotein H (855 aa).

The first 19 residues, 1-19 (MSQPYLKIAILVAATIVSA), serve as a signal peptide directing secretion. At 20–815 (IPVWTTPVST…ASYSAFKIPS (796 aa)) the chain is on the virion surface side. Asparagine 42, asparagine 48, asparagine 52, asparagine 68, asparagine 126, asparagine 189, and asparagine 217 each carry an N-linked (GlcNAc...) asparagine; by host glycan. A disordered region spans residues 174 to 195 (PVGVVLSPPRTSPDVNNTIRDD). Positions 247–310 (DTTQAIAYLG…YAGPIYKVYV (64 aa)) are interaction with gL. 4 N-linked (GlcNAc...) asparagine; by host glycosylation sites follow: asparagine 503, asparagine 679, asparagine 773, and asparagine 796. Residues 816-836 (TYLWASIGGLLLAILILYVIV) traverse the membrane as a helical segment. The Intravirion segment spans residues 837–855 (KMLCGGVINNDYSLLLNSE).

It belongs to the herpesviridae glycoprotein H family. In terms of assembly, interacts with glycoprotein L (gL); this interaction is necessary for the correct processing and cell surface expression of gH. The heterodimer gH/gL seems to interact with gB trimers during fusion. In terms of processing, N-glycosylated, O-glycosylated, and sialylated.

It is found in the virion membrane. The protein resides in the host cell membrane. The protein localises to the host endosome membrane. The heterodimer glycoprotein H-glycoprotein L is required for the fusion of viral and plasma membranes leading to virus entry into the host cell. Following initial binding to host receptor, membrane fusion is mediated by the fusion machinery composed of gB and the heterodimer gH/gL. May also be involved in the fusion between the virion envelope and the outer nuclear membrane during virion morphogenesis. The polypeptide is Envelope glycoprotein H (Equine herpesvirus 4 (strain 1942) (EHV-4)).